The primary structure comprises 335 residues: Glycerol-3-phosphate dehydrogenase [NAD(P)+] (335 aa).

NADPH-binding residues include serine 12, tryptophan 13, histidine 33, arginine 34, and lysine 108. Residues lysine 108, glycine 137, and threonine 139 each coordinate sn-glycerol 3-phosphate. Alanine 141 is a binding site for NADPH. 5 residues coordinate sn-glycerol 3-phosphate: lysine 192, aspartate 245, serine 255, arginine 256, and asparagine 257. Lysine 192 serves as the catalytic Proton acceptor. Arginine 256 is an NADPH binding site. Glutamate 282 lines the NADPH pocket.

It belongs to the NAD-dependent glycerol-3-phosphate dehydrogenase family.

Its subcellular location is the cytoplasm. It carries out the reaction sn-glycerol 3-phosphate + NAD(+) = dihydroxyacetone phosphate + NADH + H(+). The enzyme catalyses sn-glycerol 3-phosphate + NADP(+) = dihydroxyacetone phosphate + NADPH + H(+). It participates in membrane lipid metabolism; glycerophospholipid metabolism. In terms of biological role, catalyzes the reduction of the glycolytic intermediate dihydroxyacetone phosphate (DHAP) to sn-glycerol 3-phosphate (G3P), the key precursor for phospholipid synthesis. This chain is Glycerol-3-phosphate dehydrogenase [NAD(P)+], found in Methylococcus capsulatus (strain ATCC 33009 / NCIMB 11132 / Bath).